The sequence spans 460 residues: MNVLNKEVFNQTKKVLGLIVSNKLVNGFSKQFKSYMFQSPKFKPIVSTDNDDKKMIYLCDTLKKETDIPDQLKTFIKENDIKVIEKDISLNYNNFSYEQVLKTLLPKDVGIPFSFERIGHIIHVNLKDEQLPFKYIIGQAILDKNIQVKTVLNKVGEIDTVFRTFKIEILAGEPDLVAEIKENECIFRFNFEEVYWNSRLQYEHMELVNTFKKEDIICDMFAGVGPFALPAAKIKKCKVYANDLNPSSVKYMKENAKTNRLESKVEISNLDARDFVKSLVEKSIPFTHVVMNLPSTSIEFLDVFRDIFLNSTIPPPIPPPIINCYTFTKLDESSDLIKDTIKNVENVIGAKVPSDYVCYEVRDVAPKKSMMRITFRMPTILPYVGSLTTASTTTTPTTSNTNTSTTTSTTSTSTTTTESTNTNNSANNVEDKNNKKRNSTEDSNETNETDSIDTNKKLKN.

Residues H204, 243-244 (DL), 271-272 (DA), and N292 contribute to the S-adenosyl-L-methionine site. The segment covering 390–428 (ASTTTTPTTSNTNTSTTTSTTSTSTTTTESTNTNNSANN) has biased composition (low complexity). The segment at 390–460 (ASTTTTPTTS…SIDTNKKLKN (71 aa)) is disordered. Residues 442 to 451 (DSNETNETDS) are compositionally biased toward acidic residues.

Belongs to the class I-like SAM-binding methyltransferase superfamily. TRM5/TYW2 family. In terms of assembly, monomer.

It localises to the mitochondrion matrix. The protein resides in the nucleus. It is found in the cytoplasm. The enzyme catalyses guanosine(37) in tRNA + S-adenosyl-L-methionine = N(1)-methylguanosine(37) in tRNA + S-adenosyl-L-homocysteine + H(+). Functionally, specifically methylates the N1 position of guanosine-37 in various cytoplasmic and mitochondrial tRNAs. Methylation is not dependent on the nature of the nucleoside 5' of the target nucleoside. This is the first step in the biosynthesis of wybutosine (yW), a modified base adjacent to the anticodon of tRNAs and required for accurate decoding. The sequence is that of tRNA (guanine(37)-N(1))-methyltransferase (trmt5) from Dictyostelium discoideum (Social amoeba).